A 169-amino-acid chain; its full sequence is MRAFIVGRFQPFHNGHMEILKRILHENDSVIIGIGSAQFSHTLKDPFTAGERHLMISSALEESGVYNYYLVPIEDVNSNPLWVSHVESLTPPFQRVYTNNPLVKRLFYEKGYEVLSMDLLNRKEWSGTSIRNKMIRGENWKKDVPPAVARVIDEIDGVSRIRDLSESDE.

This sequence belongs to the archaeal NMN adenylyltransferase family.

The protein localises to the cytoplasm. It carries out the reaction beta-nicotinamide D-ribonucleotide + ATP + H(+) = diphosphate + NAD(+). It functions in the pathway cofactor biosynthesis; NAD(+) biosynthesis; NAD(+) from nicotinamide D-ribonucleotide: step 1/1. The sequence is that of Nicotinamide-nucleotide adenylyltransferase from Picrophilus torridus (strain ATCC 700027 / DSM 9790 / JCM 10055 / NBRC 100828 / KAW 2/3).